The chain runs to 481 residues: Glutamyl-tRNA(Gln) amidotransferase subunit A (481 aa).

Active-site charge relay system residues include K74 and S149. S173 serves as the catalytic Acyl-ester intermediate.

This sequence belongs to the amidase family. GatA subfamily. In terms of assembly, heterotrimer of A, B and C subunits.

It carries out the reaction L-glutamyl-tRNA(Gln) + L-glutamine + ATP + H2O = L-glutaminyl-tRNA(Gln) + L-glutamate + ADP + phosphate + H(+). Functionally, allows the formation of correctly charged Gln-tRNA(Gln) through the transamidation of misacylated Glu-tRNA(Gln) in organisms which lack glutaminyl-tRNA synthetase. The reaction takes place in the presence of glutamine and ATP through an activated gamma-phospho-Glu-tRNA(Gln). The protein is Glutamyl-tRNA(Gln) amidotransferase subunit A of Francisella tularensis subsp. tularensis (strain WY96-3418).